The primary structure comprises 581 residues: Arginine--tRNA ligase (581 aa).

The 'HIGH' region signature appears at 126 to 136; sequence PNLAKEMHVGH.

It belongs to the class-I aminoacyl-tRNA synthetase family. As to quaternary structure, monomer.

It is found in the cytoplasm. It catalyses the reaction tRNA(Arg) + L-arginine + ATP = L-arginyl-tRNA(Arg) + AMP + diphosphate. This Shewanella loihica (strain ATCC BAA-1088 / PV-4) protein is Arginine--tRNA ligase.